The chain runs to 1216 residues: RAB11-binding protein RELCH (1216 aa).

The segment covering 1-13 has biased composition (gly residues); sequence MAAMAPGGGGSGS. 2 disordered regions span residues 1–67 and 133–179; these read MAAM…GSSA and NPGN…NRAG. The residue at position 2 (Ala-2) is an N-acetylalanine. A phosphoserine mark is found at Ser-20 and Ser-22. The segment covering 21-31 has biased composition (acidic residues); it reads DSDEDDDEVAA. Thr-32 bears the Phosphothreonine mark. A phosphoserine mark is found at Ser-54 and Ser-56. Residues 142 to 154 show a composition bias toward low complexity; that stretch reads GTPPGMGAPGIPG. Phosphoserine is present on residues Ser-180 and Ser-182. Thr-183 bears the Phosphothreonine mark. Ser-186 is subject to Phosphoserine. Positions 197–231 form a coiled coil; it reads NRETDERVAVLEFELRKAKETIQALRANLTKAAEH. Positions 255 to 287 constitute a LisH domain; that stretch reads EKRALNFLVNEFLLKNNYKLTSITFSDENDDQD. The stretch at 358–397 forms a coiled coil; it reads LVQKLEDKISLLNNEKWSLMEQIRRLESEMDILKAEHFAT. Phosphoserine is present on Ser-385. Residues 409–473 form a disordered region; that stretch reads VWSSQKDSED…ELPPSSVSNK (65 aa). The segment covering 429 to 440 has biased composition (basic and acidic residues); it reads DQEKTKDVHLEI. Ser-453 carries the phosphoserine modification. Residues 497-779 are interaction with RAB11A and RAB11B; the sequence is CRMSADSRLG…SSKAKLHGEV (283 aa). HEAT repeat units follow at residues 601–639 and 640–679; these read LLPQCWEQINHKYPERRLLVAESCGALAPYLPKEIRSSL and VLSMLQQMLMEDKADLVREAVIKSLGIIMGYIDDPDKYQQ. Ser-792 carries the phosphoserine modification. The stretch at 1004-1042 is one HEAT 3 repeat; sequence VVPALITLSSDPEISVRIATIPAFGTIMETVIQRELLER. A Phosphoserine modification is found at Ser-1149.

Interacts with RAB11A (VIA-GTP form). Interacts with RAB11B. Interacts (via the third HEAT repeat) with OSBP (via C-terminus). Found in a complex composed of RELCH, OSBP1 and RAB11A.

It is found in the recycling endosome. The protein resides in the golgi apparatus. The protein localises to the trans-Golgi network. Its function is as follows. Regulates intracellular cholesterol distribution from recycling endosomes to the trans-Golgi network through interactions with RAB11 and OSBP. Functions in membrane tethering and promotes OSBP-mediated cholesterol transfer between RAB11-bound recycling endosomes and OSBP-bound Golgi-like membranes. The sequence is that of RAB11-binding protein RELCH (Relch) from Mus musculus (Mouse).